The following is a 679-amino-acid chain: Protein hook (679 aa).

Residues 6–123 (NEMYYSLLEW…RLLQLVLGCA (118 aa)) enclose the Calponin-homology (CH) domain. Coiled-coil stretches lie at residues 135–437 (EIMC…LKCG) and 480–574 (QTAL…QEIL).

The protein belongs to the hook family. In terms of assembly, homodimer. Interacts with microtubules via its N-terminus.

The protein localises to the cytoplasm. It is found in the cytoskeleton. It localises to the endosome. Its subcellular location is the synapse. In terms of biological role, involved in endocytic trafficking by stabilizing organelles of the endocytic pathway. Probably acts as a cytoskeletal linker protein required to tether endosome vesicles to the cytoskeleton. Involved in modulation of endocytosis at stages required for down-regulation of membrane proteins that control synapse size. Not involved in synaptic vesicle recycling. Required in R7 cells for boss endocytosis into multivesicular bodies (MVBs). Has a role in regulating adult longevity. This Drosophila yakuba (Fruit fly) protein is Protein hook.